We begin with the raw amino-acid sequence, 171 residues long: Small ribosomal subunit protein uS5 (171 aa).

Residues 14-77 (YIEKLVNIRR…DKARKAMKNV (64 aa)) form the S5 DRBM domain.

Belongs to the universal ribosomal protein uS5 family. In terms of assembly, part of the 30S ribosomal subunit. Contacts proteins S4 and S8.

In terms of biological role, with S4 and S12 plays an important role in translational accuracy. Located at the back of the 30S subunit body where it stabilizes the conformation of the head with respect to the body. The protein is Small ribosomal subunit protein uS5 of Vesicomyosocius okutanii subsp. Calyptogena okutanii (strain HA).